The chain runs to 559 residues: Transmembrane E3 ubiquitin-protein ligase FLY2 (559 aa).

Residues methionine 1–glycine 29 form the signal peptide. Residues leucine 30 to asparagine 259 lie on the Lumenal side of the membrane. Residues lysine 260–isoleucine 280 form a helical membrane-spanning segment. Residues arginine 281–lysine 294 are Cytoplasmic-facing. A helical membrane pass occupies residues valine 295–leucine 315. Topologically, residues threonine 316–glycine 318 are lumenal. Residues isoleucine 319 to phenylalanine 339 form a helical membrane-spanning segment. The Cytoplasmic portion of the chain corresponds to serine 340–leucine 370. Residues serine 371 to phenylalanine 391 form a helical membrane-spanning segment. At histidine 392–tyrosine 394 the chain is on the lumenal side. A helical membrane pass occupies residues methionine 395 to valine 415. At arginine 416–histidine 423 the chain is on the cytoplasmic side. A helical transmembrane segment spans residues proline 424 to cysteine 444. Residues proline 445–cysteine 458 are Lumenal-facing. A helical transmembrane segment spans residues valine 459 to glycine 479. The Cytoplasmic portion of the chain corresponds to serine 480–alanine 559. The RING-type; atypical zinc-finger motif lies at cysteine 509–arginine 553.

As to expression, highly expressed in stems. Expressed in root xylem and seed coat.

Its subcellular location is the endomembrane system. It catalyses the reaction S-ubiquitinyl-[E2 ubiquitin-conjugating enzyme]-L-cysteine + [acceptor protein]-L-lysine = [E2 ubiquitin-conjugating enzyme]-L-cysteine + N(6)-ubiquitinyl-[acceptor protein]-L-lysine.. The protein operates within protein modification; protein ubiquitination. E3 ubiquitin-protein ligase that may be involved in xylem development. The protein is Transmembrane E3 ubiquitin-protein ligase FLY2 of Arabidopsis thaliana (Mouse-ear cress).